The sequence spans 93 residues: Small ribosomal subunit protein uS19c (93 aa).

Belongs to the universal ribosomal protein uS19 family.

It is found in the plastid. Its subcellular location is the chloroplast. Functionally, protein S19 forms a complex with S13 that binds strongly to the 16S ribosomal RNA. The sequence is that of Small ribosomal subunit protein uS19c from Lolium perenne (Perennial ryegrass).